A 198-amino-acid polypeptide reads, in one-letter code: UDP-N-acetylglucosamine transferase subunit ALG13 (198 aa).

It belongs to the glycosyltransferase 28 family. Heterodimer with ALG14 to form a functional enzyme.

The protein localises to the endoplasmic reticulum. It carries out the reaction an N-acetyl-alpha-D-glucosaminyl-diphospho-di-trans,poly-cis-dolichol + UDP-N-acetyl-alpha-D-glucosamine = an N,N'-diacetylchitobiosyl-diphospho-di-trans,poly-cis-dolichol + UDP + H(+). Involved in protein N-glycosylation. Essential for the second step of the dolichol-linked oligosaccharide pathway. The chain is UDP-N-acetylglucosamine transferase subunit ALG13 (ALG13) from Candida glabrata (strain ATCC 2001 / BCRC 20586 / JCM 3761 / NBRC 0622 / NRRL Y-65 / CBS 138) (Yeast).